A 750-amino-acid polypeptide reads, in one-letter code: uncharacterized protein (750 aa).

N-linked (GlcNAc...) asparagine glycans are attached at residues asparagine 61, asparagine 84, asparagine 115, asparagine 154, asparagine 176, asparagine 197, asparagine 207, asparagine 228, asparagine 241, asparagine 267, asparagine 293, asparagine 299, asparagine 312, asparagine 335, asparagine 351, asparagine 373, asparagine 389, and asparagine 519. Residues serine 675 and serine 678 each carry the phosphoserine modification. Lysine 697 is covalently cross-linked (Glycyl lysine isopeptide (Lys-Gly) (interchain with G-Cter in ubiquitin)). 2 stretches are compositionally biased toward polar residues: residues 703 to 726 (EITA…SNRT) and 736 to 750 (KDSN…HLVA). The tract at residues 703–750 (EITAIDNSSSANNTDVTGSTSNRTELSHPDVTPKDSNGPVNNNAHLVA) is disordered. N-linked (GlcNAc...) asparagine glycosylation is found at asparagine 709, asparagine 714, and asparagine 724.

N-glycosylated.

It is found in the mitochondrion. This is an uncharacterized protein from Saccharomyces cerevisiae (strain ATCC 204508 / S288c) (Baker's yeast).